A 263-amino-acid polypeptide reads, in one-letter code: MRNFFTLFFAAIFSLGALILAIVACAGSTKNYSPINKIYCAELDLSQMKVSTVLPSLSSATLSSLGLPSYINIGLWSYCTVDSSHNIQSCSSPHGIQNFNLSSLVYDNINNNEALELMDSVASVVLPEKLKSKMTYYNNLVKCMFITILIGIVLTFVNLVFNVLRWIIHIRPLTWFGAFFSFFAFAALLVSIGSCLGTYSYIKYILKHNYSDYGISMSIGRNYQGLMWGAVVGALLNFILWCSVRSRPTVIYANAPIEEKPLI.

Topologically, residues 1 to 6 (MRNFFT) are cytoplasmic. A helical transmembrane segment spans residues 7–27 (LFFAAIFSLGALILAIVACAG). The Extracellular segment spans residues 28-143 (STKNYSPINK…MTYYNNLVKC (116 aa)). N-linked (GlcNAc...) asparagine glycosylation occurs at N100. The chain crosses the membrane as a helical span at residues 144-164 (MFITILIGIVLTFVNLVFNVL). At 165–172 (RWIIHIRP) the chain is on the cytoplasmic side. A helical membrane pass occupies residues 173–193 (LTWFGAFFSFFAFAALLVSIG). At 194–223 (SCLGTYSYIKYILKHNYSDYGISMSIGRNY) the chain is on the extracellular side. An N-linked (GlcNAc...) asparagine glycan is attached at N209. Residues 224-244 (QGLMWGAVVGALLNFILWCSV) traverse the membrane as a helical segment. The Cytoplasmic portion of the chain corresponds to 245 to 263 (RSRPTVIYANAPIEEKPLI). A Glycyl lysine isopeptide (Lys-Gly) (interchain with G-Cter in ubiquitin) cross-link involves residue K260.

Belongs to the SUR7 family. N-glycosylated.

It is found in the cell membrane. Contributes to the wild-type cellular response to nitrogen stress through signaling pathways that regulate the expression of genes involved in amino acid biosynthesis. Required for wild-type filamentous growth, cell growth, and cell-cell adhesion. The chain is Protein PUN1 (PUN1) from Saccharomyces cerevisiae (strain ATCC 204508 / S288c) (Baker's yeast).